Here is a 203-residue protein sequence, read N- to C-terminus: Urease accessory protein UreG (203 aa).

GTP is bound at residue 14-21 (GPVGSGKT).

The protein belongs to the SIMIBI class G3E GTPase family. UreG subfamily. In terms of assembly, homodimer. UreD, UreF and UreG form a complex that acts as a GTP-hydrolysis-dependent molecular chaperone, activating the urease apoprotein by helping to assemble the nickel containing metallocenter of UreC. The UreE protein probably delivers the nickel.

The protein resides in the cytoplasm. Functionally, facilitates the functional incorporation of the urease nickel metallocenter. This process requires GTP hydrolysis, probably effectuated by UreG. This Rhizobium meliloti (strain 1021) (Ensifer meliloti) protein is Urease accessory protein UreG.